The primary structure comprises 951 residues: Protein translocase subunit SecA 1 (951 aa).

ATP is bound by residues Gln-87, 105 to 109 (GEGKT), and Asp-525. Positions 911–942 (PVVSADRSSRDPGNPASWGKVGRNEDCPCGSG) are disordered. The Zn(2+) site is built by Cys-937, Cys-939, Cys-948, and His-949.

It belongs to the SecA family. In terms of assembly, monomer and homodimer. Part of the essential Sec protein translocation apparatus which comprises SecA, SecYEG and auxiliary proteins SecDF-YajC and YidC. Zn(2+) is required as a cofactor.

It localises to the cell inner membrane. It is found in the cytoplasm. The catalysed reaction is ATP + H2O + cellular proteinSide 1 = ADP + phosphate + cellular proteinSide 2.. Part of the Sec protein translocase complex. Interacts with the SecYEG preprotein conducting channel. Has a central role in coupling the hydrolysis of ATP to the transfer of proteins into and across the cell membrane, serving both as a receptor for the preprotein-SecB complex and as an ATP-driven molecular motor driving the stepwise translocation of polypeptide chains across the membrane. The chain is Protein translocase subunit SecA 1 from Nitrobacter hamburgensis (strain DSM 10229 / NCIMB 13809 / X14).